Reading from the N-terminus, the 392-residue chain is S-adenosylmethionine synthase (392 aa).

His-17 is an ATP binding site. Asp-19 is a Mg(2+) binding site. Glu-45 is a binding site for K(+). The L-methionine site is built by Glu-58 and Gln-102. The interval 102-112 (QSADIAQGVDA) is flexible loop. ATP contacts are provided by residues 169–171 (DAK), 235–236 (KF), Asp-244, 250–251 (RK), Ala-267, and Lys-271. Asp-244 contacts L-methionine. Lys-275 is a binding site for L-methionine.

This sequence belongs to the AdoMet synthase family. As to quaternary structure, homotetramer; dimer of dimers. Mg(2+) is required as a cofactor. The cofactor is K(+).

The protein resides in the cytoplasm. It carries out the reaction L-methionine + ATP + H2O = S-adenosyl-L-methionine + phosphate + diphosphate. It participates in amino-acid biosynthesis; S-adenosyl-L-methionine biosynthesis; S-adenosyl-L-methionine from L-methionine: step 1/1. Its function is as follows. Catalyzes the formation of S-adenosylmethionine (AdoMet) from methionine and ATP. The overall synthetic reaction is composed of two sequential steps, AdoMet formation and the subsequent tripolyphosphate hydrolysis which occurs prior to release of AdoMet from the enzyme. The sequence is that of S-adenosylmethionine synthase from Methylobacterium sp. (strain 4-46).